We begin with the raw amino-acid sequence, 573 residues long: Glutamate--tRNA ligase (573 aa).

The 'HIGH' region motif lies at 106 to 116 (PNPDGAFHLGN).

Belongs to the class-I aminoacyl-tRNA synthetase family. Glutamate--tRNA ligase type 2 subfamily.

It localises to the cytoplasm. The catalysed reaction is tRNA(Glu) + L-glutamate + ATP = L-glutamyl-tRNA(Glu) + AMP + diphosphate. In terms of biological role, catalyzes the attachment of glutamate to tRNA(Glu) in a two-step reaction: glutamate is first activated by ATP to form Glu-AMP and then transferred to the acceptor end of tRNA(Glu). The protein is Glutamate--tRNA ligase of Thermococcus onnurineus (strain NA1).